Reading from the N-terminus, the 207-residue chain is ATP-dependent Clp protease proteolytic subunit (207 aa).

Serine 111 serves as the catalytic Nucleophile. Histidine 136 is an active-site residue.

This sequence belongs to the peptidase S14 family. As to quaternary structure, fourteen ClpP subunits assemble into 2 heptameric rings which stack back to back to give a disk-like structure with a central cavity, resembling the structure of eukaryotic proteasomes.

It is found in the cytoplasm. It catalyses the reaction Hydrolysis of proteins to small peptides in the presence of ATP and magnesium. alpha-casein is the usual test substrate. In the absence of ATP, only oligopeptides shorter than five residues are hydrolyzed (such as succinyl-Leu-Tyr-|-NHMec, and Leu-Tyr-Leu-|-Tyr-Trp, in which cleavage of the -Tyr-|-Leu- and -Tyr-|-Trp bonds also occurs).. Cleaves peptides in various proteins in a process that requires ATP hydrolysis. Has a chymotrypsin-like activity. Plays a major role in the degradation of misfolded proteins. This is ATP-dependent Clp protease proteolytic subunit from Yersinia enterocolitica serotype O:8 / biotype 1B (strain NCTC 13174 / 8081).